We begin with the raw amino-acid sequence, 260 residues long: Thiazole synthase (260 aa).

Lysine 96 (schiff-base intermediate with DXP) is an active-site residue. Residues glycine 157, 184–185 (AG), and 206–207 (NT) contribute to the 1-deoxy-D-xylulose 5-phosphate site.

The protein belongs to the ThiG family. Homotetramer. Forms heterodimers with either ThiH or ThiS.

It localises to the cytoplasm. The enzyme catalyses [ThiS sulfur-carrier protein]-C-terminal-Gly-aminoethanethioate + 2-iminoacetate + 1-deoxy-D-xylulose 5-phosphate = [ThiS sulfur-carrier protein]-C-terminal Gly-Gly + 2-[(2R,5Z)-2-carboxy-4-methylthiazol-5(2H)-ylidene]ethyl phosphate + 2 H2O + H(+). The protein operates within cofactor biosynthesis; thiamine diphosphate biosynthesis. Its function is as follows. Catalyzes the rearrangement of 1-deoxy-D-xylulose 5-phosphate (DXP) to produce the thiazole phosphate moiety of thiamine. Sulfur is provided by the thiocarboxylate moiety of the carrier protein ThiS. In vitro, sulfur can be provided by H(2)S. The protein is Thiazole synthase of Rhodopseudomonas palustris (strain TIE-1).